Reading from the N-terminus, the 509-residue chain is Cobyric acid synthase (509 aa).

The GATase cobBQ-type domain occupies 262 to 459; it reads EIKVGIIKLP…IHGIFENDNW (198 aa). C343 acts as the Nucleophile in catalysis. H451 is a catalytic residue.

This sequence belongs to the CobB/CobQ family. CobQ subfamily.

The protein operates within cofactor biosynthesis; adenosylcobalamin biosynthesis. Its function is as follows. Catalyzes amidations at positions B, D, E, and G on adenosylcobyrinic A,C-diamide. NH(2) groups are provided by glutamine, and one molecule of ATP is hydrogenolyzed for each amidation. This Prochlorococcus marinus (strain AS9601) protein is Cobyric acid synthase.